A 393-amino-acid polypeptide reads, in one-letter code: SH3 domain-binding protein 5-like (393 aa).

The disordered stretch occupies residues 1–58 (MAELRQVPGGRETPQGELRPEVVEDEVPRSPVAEEPGGGGSSSSEAKLSPREEEELDP). The residue at position 13 (Thr-13) is a Phosphothreonine. The span at 18–28 (LRPEVVEDEVP) shows a compositional bias: basic and acidic residues. Phosphoserine occurs at positions 30 and 49. Coiled coils occupy residues 59–140 (RIQE…YERA) and 169–272 (WQEM…EQIH). Residues 273–332 (ARRRGGLPPHPLGPRRSSPVGAEAGPEDMEDGDSGIEGAEGAGLEEGSSLGPGPAPDTDT) form a disordered region. A compositionally biased stretch (acidic residues) spans 297-306 (GPEDMEDGDS). Residues 317 to 332 (EEGSSLGPGPAPDTDT) are compositionally biased toward low complexity. Residues Ser-343, Ser-350, Ser-358, Ser-362, and Ser-378 each carry the phosphoserine modification. The disordered stretch occupies residues 362–393 (SLDGQELGTRSGGRRGSDGGARGGRHQRSVSL). Residues 384–393 (GGRHQRSVSL) are compositionally biased toward basic residues.

The protein belongs to the SH3BP5 family.

In terms of biological role, functions as a guanine nucleotide exchange factor (GEF) for RAB11A. This Homo sapiens (Human) protein is SH3 domain-binding protein 5-like (SH3BP5L).